The chain runs to 342 residues: Probable dual-specificity RNA methyltransferase RlmN (342 aa).

Glu-91 acts as the Proton acceptor in catalysis. The Radical SAM core domain maps to 97-327; sequence YKHGNSICVS…TTIRREMGAD (231 aa). Cys-104 and Cys-332 are oxidised to a cystine. Positions 111, 115, and 118 each coordinate [4Fe-4S] cluster. S-adenosyl-L-methionine is bound by residues 158-159, Ser-190, 213-215, and Asn-289; these read GE and SLH. Catalysis depends on Cys-332, which acts as the S-methylcysteine intermediate.

The protein belongs to the radical SAM superfamily. RlmN family. [4Fe-4S] cluster serves as cofactor.

It localises to the cytoplasm. It carries out the reaction adenosine(2503) in 23S rRNA + 2 reduced [2Fe-2S]-[ferredoxin] + 2 S-adenosyl-L-methionine = 2-methyladenosine(2503) in 23S rRNA + 5'-deoxyadenosine + L-methionine + 2 oxidized [2Fe-2S]-[ferredoxin] + S-adenosyl-L-homocysteine. The catalysed reaction is adenosine(37) in tRNA + 2 reduced [2Fe-2S]-[ferredoxin] + 2 S-adenosyl-L-methionine = 2-methyladenosine(37) in tRNA + 5'-deoxyadenosine + L-methionine + 2 oxidized [2Fe-2S]-[ferredoxin] + S-adenosyl-L-homocysteine. In terms of biological role, specifically methylates position 2 of adenine 2503 in 23S rRNA and position 2 of adenine 37 in tRNAs. The polypeptide is Probable dual-specificity RNA methyltransferase RlmN (Clostridium botulinum (strain ATCC 19397 / Type A)).